We begin with the raw amino-acid sequence, 274 residues long: Protein LNK4 (274 aa).

A disordered region spans residues 209–249; the sequence is NSQQKSDSNSDEFLEDRTRETEFETKLNRQSRGQSHIQQDG. The span at 223–235 shows a compositional bias: basic and acidic residues; that stretch reads EDRTRETEFETKL. The segment covering 236-249 has biased composition (polar residues); it reads NRQSRGQSHIQQDG.

In terms of assembly, interacts with REV8.

Functionally, probable transcriptional coactivator. The polypeptide is Protein LNK4 (Arabidopsis thaliana (Mouse-ear cress)).